Consider the following 72-residue polypeptide: MPKSEIHPTWFSNAPVLSEGKTLCSIGSTKPQLQVDVWLGNHPFYTNSQTLVDSEGRVDRFMKKYGLQTKDN.

The protein belongs to the bacterial ribosomal protein bL31 family. Type A subfamily. In terms of assembly, part of the 50S ribosomal subunit.

Its subcellular location is the plastid. The protein localises to the chloroplast. Binds the 23S rRNA. The polypeptide is Large ribosomal subunit protein bL31c (rpl31) (Thalassiosira pseudonana (Marine diatom)).